Consider the following 465-residue polypeptide: Box C/D snoRNA protein 1 (465 aa).

The segment at 1–72 (MEFAAENEGK…GSRQRPEEIP (72 aa)) is disordered. S25 carries the post-translational modification Phosphoserine. Basic and acidic residues predominate over residues 56–70 (EIGDGEEGSRQRPEE). Residues K79, K108, K118, K138, K148, K157, K168, K178, and K195 each participate in a glycyl lysine isopeptide (Lys-Gly) (interchain with G-Cter in SUMO2) cross-link. Positions 215, 218, 227, 230, 235, 239, 243, and 249 each coordinate Zn(2+). The HIT-type zinc finger occupies 215 to 249 (CETCGTEEAKYRCPRCMRYSCSLPCVKKHKAELTC). A Glycyl lysine isopeptide (Lys-Gly) (interchain with G-Cter in SUMO2) cross-link involves residue K454.

It belongs to the BCD1 family. Interacts with FBL, SNU13, NOP58, NUFIP1, RUVBL1, RUVBL2 and TAF9. Interacts (via HIT-type zinc finger) with the RUVBL1/RUVBL2 complex in the presence of ADP.

Its function is as follows. Required for box C/D snoRNAs accumulation involved in snoRNA processing, snoRNA transport to the nucleolus and ribosome biogenesis. This is Box C/D snoRNA protein 1 (ZNHIT6) from Pongo abelii (Sumatran orangutan).